Here is a 271-residue protein sequence, read N- to C-terminus: Dermonecrotic toxin SpeSicTox-betaIF1 (271 aa).

His3 is an active-site residue. Mg(2+) contacts are provided by Glu23 and Asp25. The active-site Nucleophile is His39. Cystine bridges form between Cys43/Cys49 and Cys45/Cys188. Asp83 contributes to the Mg(2+) binding site.

Belongs to the arthropod phospholipase D family. Class II subfamily. Requires Mg(2+) as cofactor. As to expression, expressed by the venom gland.

It localises to the secreted. The enzyme catalyses an N-(acyl)-sphingosylphosphocholine = an N-(acyl)-sphingosyl-1,3-cyclic phosphate + choline. It carries out the reaction an N-(acyl)-sphingosylphosphoethanolamine = an N-(acyl)-sphingosyl-1,3-cyclic phosphate + ethanolamine. The catalysed reaction is a 1-acyl-sn-glycero-3-phosphocholine = a 1-acyl-sn-glycero-2,3-cyclic phosphate + choline. It catalyses the reaction a 1-acyl-sn-glycero-3-phosphoethanolamine = a 1-acyl-sn-glycero-2,3-cyclic phosphate + ethanolamine. Functionally, dermonecrotic toxins cleave the phosphodiester linkage between the phosphate and headgroup of certain phospholipids (sphingolipid and lysolipid substrates), forming an alcohol (often choline) and a cyclic phosphate. This toxin acts on sphingomyelin (SM). It may also act on ceramide phosphoethanolamine (CPE), lysophosphatidylcholine (LPC) and lysophosphatidylethanolamine (LPE), but not on lysophosphatidylserine (LPS), and lysophosphatidylglycerol (LPG). It acts by transphosphatidylation, releasing exclusively cyclic phosphate products as second products. Induces dermonecrosis, hemolysis, increased vascular permeability, edema, inflammatory response, and platelet aggregation. This chain is Dermonecrotic toxin SpeSicTox-betaIF1, found in Sicarius peruensis (Six-eyed sand spider).